Consider the following 304-residue polypeptide: GTP cyclohydrolase FolE2 (304 aa).

It belongs to the GTP cyclohydrolase IV family.

The catalysed reaction is GTP + H2O = 7,8-dihydroneopterin 3'-triphosphate + formate + H(+). It functions in the pathway cofactor biosynthesis; 7,8-dihydroneopterin triphosphate biosynthesis; 7,8-dihydroneopterin triphosphate from GTP: step 1/1. Functionally, converts GTP to 7,8-dihydroneopterin triphosphate. The protein is GTP cyclohydrolase FolE2 of Bdellovibrio bacteriovorus (strain ATCC 15356 / DSM 50701 / NCIMB 9529 / HD100).